A 145-amino-acid chain; its full sequence is Transcriptional regulator SlyA (145 aa).

Residues 2–135 (ELPLGSDLAR…LALLVSRLEK (134 aa)) form the HTH marR-type domain. Residues 49-72 (QIQLAKAIGIEQPSLVRTLDQLEE) constitute a DNA-binding region (H-T-H motif).

Belongs to the SlyA family. As to quaternary structure, homodimer.

In terms of biological role, transcription regulator that can specifically activate or repress expression of target genes. Regulates genes involved in production of antibiotic and exoenzyme virulence determinants in the phytopathogen. Required for the expression of the virulence protein evf during Drosophila melanogaster infection. This chain is Transcriptional regulator SlyA, found in Pectobacterium carotovorum subsp. carotovorum (Erwinia carotovora subsp. carotovora).